We begin with the raw amino-acid sequence, 293 residues long: Movement protein BC1 (293 aa).

This sequence belongs to the begomovirus movement protein BC1 family. In terms of assembly, binds to dimeric supercoiled plasmid DNA. Phosphorylated.

Its subcellular location is the host cell membrane. The protein localises to the host microsome membrane. It is found in the host endoplasmic reticulum membrane. In terms of biological role, transports viral genome to neighboring plant cells directly through plasmosdesmata, without any budding. The movement protein allows efficient cell to cell propagation, by bypassing the host cell wall barrier. Begomovirus genome is shuttled out of nucleus by Nuclear shuttle protein (NSP) and the movement protein transports the DNA-NSP complex to cell plasmodesmata and facilitates further movement across the cell wall. This is Movement protein BC1 from Cucurbita moschata (Winter crookneck squash).